Reading from the N-terminus, the 81-residue chain is Large ribosomal subunit protein bL31B (81 aa).

This sequence belongs to the bacterial ribosomal protein bL31 family. Type B subfamily. In terms of assembly, part of the 50S ribosomal subunit.

In Limosilactobacillus fermentum (strain NBRC 3956 / LMG 18251) (Lactobacillus fermentum), this protein is Large ribosomal subunit protein bL31B.